A 1516-amino-acid chain; its full sequence is Mediator of RNA polymerase II transcription subunit 14 (1516 aa).

2 disordered regions span residues 22–98 (LSSQ…EVPA) and 1434–1516 (MHRQ…YPPQ). A compositionally biased stretch (low complexity) spans 34–47 (SPAAPISPAPSGSA). Over residues 72-83 (SEVDVKSIHSSD) the composition is skewed to basic and acidic residues. Low complexity predominate over residues 1463 to 1473 (SHQQHMMNPGS). The span at 1474–1483 (VGPGSVGGPG) shows a compositional bias: gly residues. The span at 1502-1516 (QSYHHPLHHQQYPPQ) shows a compositional bias: low complexity.

This sequence belongs to the Mediator complex subunit 14 family. Component of the Mediator complex.

Its subcellular location is the nucleus. Functionally, component of the Mediator complex, a coactivator involved in the regulated transcription of nearly all RNA polymerase II-dependent genes. Mediator functions as a bridge to convey information from gene-specific regulatory proteins to the basal RNA polymerase II transcription machinery. Mediator is recruited to promoters by direct interactions with regulatory proteins and serves as a scaffold for the assembly of a functional preinitiation complex with RNA polymerase II and the general transcription factors. Required for transcription in the embryo and for phosphorylation of the RNA polymerase II C-terminal domain repeat. This chain is Mediator of RNA polymerase II transcription subunit 14 (rgr-1), found in Caenorhabditis elegans.